Here is a 176-residue protein sequence, read N- to C-terminus: Ribosome maturation factor RimM (176 aa).

Residues 97-176 (EDEFYWRDLI…QITVDWDPDF (80 aa)) form the PRC barrel domain.

Belongs to the RimM family. In terms of assembly, binds ribosomal protein uS19.

The protein resides in the cytoplasm. Functionally, an accessory protein needed during the final step in the assembly of 30S ribosomal subunit, possibly for assembly of the head region. Essential for efficient processing of 16S rRNA. May be needed both before and after RbfA during the maturation of 16S rRNA. It has affinity for free ribosomal 30S subunits but not for 70S ribosomes. In Shewanella sediminis (strain HAW-EB3), this protein is Ribosome maturation factor RimM.